Here is a 208-residue protein sequence, read N- to C-terminus: Large ribosomal subunit protein bL17 (208 aa).

The disordered stretch occupies residues 122-208; it reads TEKKKKKPAK…ASEEAPPKTE (87 aa). A compositionally biased stretch (low complexity) spans 151 to 179; the sequence is ADTPAPAAEESAPAKAAEPEAEAAAPEAE.

Belongs to the bacterial ribosomal protein bL17 family. As to quaternary structure, part of the 50S ribosomal subunit. Contacts protein L32.

The protein is Large ribosomal subunit protein bL17 of Desulfosudis oleivorans (strain DSM 6200 / JCM 39069 / Hxd3) (Desulfococcus oleovorans).